The chain runs to 598 residues: Pentatricopeptide repeat-containing protein At1g09900 (598 aa).

PPR repeat units lie at residues Glu-101–Pro-135, Asp-136–Pro-170, Asp-171–Ser-201, Asp-203–Pro-237, Asp-238–Pro-272, Asp-273–Pro-307, Asn-308–Pro-342, Ser-343–Pro-377, Asn-378–Pro-412, Asp-413–Pro-447, Val-448–Pro-482, Asp-483–Pro-517, Asn-518–Pro-552, and Asn-553–Lys-587.

This sequence belongs to the PPR family. P subfamily.

The chain is Pentatricopeptide repeat-containing protein At1g09900 from Arabidopsis thaliana (Mouse-ear cress).